The sequence spans 529 residues: Ectonucleoside triphosphate diphosphohydrolase 3 (529 aa).

Residues 1–22 (MFTVMTRQPCEQAGFRALSRTP) are Cytoplasmic-facing. The chain crosses the membrane as a helical span at residues 23–43 (AIVTLVVLLVSIVVLVTLTLI). The Extracellular portion of the chain corresponds to 44-485 (QIRHPQVLPP…PLIHLPIQPP (442 aa)). Asn81 carries N-linked (GlcNAc...) asparagine glycosylation. A disulfide bond links Cys92 and Cys116. N-linked (GlcNAc...) asparagine glycosylation is present at Asn149. Glu182 (proton acceptor) is an active-site residue. 222–226 (GASTQ) is a binding site for ATP. Asn238, Asn284, and Asn318 each carry an N-linked (GlcNAc...) asparagine glycan. 3 disulfide bridges follow: Cys261–Cys308, Cys289–Cys334, and Cys347–Cys353. Residues Asn381 and Asn392 are each glycosylated (N-linked (GlcNAc...) asparagine). Cys399 and Cys422 form a disulfide bridge. N-linked (GlcNAc...) asparagine glycosylation is present at Asn454. A helical transmembrane segment spans residues 486 to 506 (VFMGVLAFFTAIALLCLAFLL). Residues 507–529 (YLCSSFRTKERSENAFDQAVDSD) lie on the Cytoplasmic side of the membrane.

It belongs to the GDA1/CD39 NTPase family. The cofactor is Ca(2+). Mg(2+) serves as cofactor.

The protein localises to the cell membrane. It catalyses the reaction a ribonucleoside 5'-triphosphate + 2 H2O = a ribonucleoside 5'-phosphate + 2 phosphate + 2 H(+). Catalyzes the hydrolysis of nucleoside triphosphates and diphosphates. Has a threefold preference for the hydrolysis of ATP and UTP over ADP and UDP. The sequence is that of Ectonucleoside triphosphate diphosphohydrolase 3 from Mus musculus (Mouse).